We begin with the raw amino-acid sequence, 165 residues long: MAWRPGERGAPASRPRLALLLLLLLLPLPSGAWYKHVASPRYHTVGRAAGLLMGLRRSPYLWRRALRAAAGPLARDTLSPEPAAREAPLLLPSWVQELWETRRRSSQAGIPVRAPRSPRAPEPALEPESLDFSGAGQRLRRDVSRPAVDPAANRLGLPCLAPGPF.

Positions 1–32 (MAWRPGERGAPASRPRLALLLLLLLLPLPSGA) are cleaved as a signal peptide. The propeptide occupies 65–165 (ALRAAAGPLA…GLPCLAPGPF (101 aa)). Residues 106–165 (SQAGIPVRAPRSPRAPEPALEPESLDFSGAGQRLRRDVSRPAVDPAANRLGLPCLAPGPF) form a disordered region. Positions 113 to 127 (RAPRSPRAPEPALEP) are enriched in low complexity. Ser-133 carries an O-linked (Xyl...) (chondroitin sulfate) serine glycan.

It belongs to the neuropeptide B/W family. In terms of tissue distribution, detected in cerebrospinal fluid and urine (at protein level). Detected at high levels in the substantia nigra, fetal kidney and trachea; at lower levels in testis, uterus, ovary and placenta. Not detectable in many regions of the central nervous system. Also detected at high levels in lymphoblastic leukemia and colorectal adenocarcinoma.

It localises to the secreted. In terms of biological role, plays a regulatory role in the organization of neuroendocrine signals accessing the anterior pituitary gland. Stimulates water drinking and food intake. May play a role in the hypothalamic response to stress. NPW23 activates GPR7 and GPR8 more efficiently than NPW30. This Homo sapiens (Human) protein is Neuropeptide W (NPW).